The primary structure comprises 789 residues: Subtilisin-like protease Glyma18g48580 (789 aa).

A signal peptide spans 1–27 (MGSSIFCLHLILSSFFLFTFLLAAVNG). In terms of domain architecture, Inhibitor I9 spans 32–116 (YIVYMGAHSH…VFLSKEHKLH (85 aa)). A Peptidase S8 domain is found at 120–644 (SWEFLGLHRR…SGHVRPDLAI (525 aa)). Active-site charge relay system residues include Asp-150 and His-224. In terms of domain architecture, PA spans 401–489 (TFRDAQLCRR…RPHGVKTTAI (89 aa)). The segment at 468 to 499 (STVNTPPRRAKSRPHGVKTTAIGDEDDPLKTG) is disordered. Ser-576 functions as the Charge relay system in the catalytic mechanism.

It belongs to the peptidase S8 family. In terms of tissue distribution, expressed in roots, stems, flowers and young leaves. Barely detectable in matures leaves.

The protein localises to the secreted. Its function is as follows. Produces a rapid alkalinization of the cellular media and the induction of defense-related genes, including chitinase 1b, chalcone synthase and CYP93A1. The receptor for GmSubPep is probably different from the receptor(s) for GmPep890 and GmPep914. This is Subtilisin-like protease Glyma18g48580 from Glycine max (Soybean).